A 1325-amino-acid polypeptide reads, in one-letter code: ATP-binding cassette sub-family C member 4 (1325 aa).

Helical transmembrane passes span 93–113 (LILG…PLFL), 136–156 (GYAA…HLYF), 205–225 (FDQV…AIAV), 227–247 (VLLW…LVIL), 322–342 (ASFF…YVLL), and 351–371 (VFVA…FFPS). Residues 93 to 377 (LILGIFTLIE…FFPSAIERGS (285 aa)) form the ABC transmembrane type-1 1 domain. The ABC transporter 1 domain maps to 410-633 (VHVQDFTAFW…GVDFGSLLKK (224 aa)). 445–452 (GPVGAGKS) lines the ATP pocket. Phosphothreonine is present on residues threonine 646 and threonine 648. Residues 657–667 (ASIWSQQSSRP) show a composition bias toward polar residues. The segment at 657–690 (ASIWSQQSSRPSLKDGAPEGQDAENTQAVQPEES) is disordered. A phosphoserine mark is found at serine 664 and serine 668. A run of 5 helical transmembrane segments spans residues 710 to 730 (SWFF…FYVL), 761 to 781 (LSWY…FGIA), 849 to 869 (LVVS…IPLV), 954 to 974 (AICA…AKTL), and 977 to 997 (GQVG…QWSV). Residues 714 to 1005 (IIFLVLLNMV…SVRQSAEVEN (292 aa)) enclose the ABC transmembrane type-1 2 domain. Positions 1041-1274 (IVFDNVNFTY…PESLFYKMVQ (234 aa)) constitute an ABC transporter 2 domain. 1075-1082 (GRTGAGKS) is a binding site for ATP. A PDZ-binding motif is present at residues 1322–1325 (ETAL).

As to quaternary structure, interacts (via PDZ-binding motif) with SNX27 (via PDZ domain); this interaction accelerates MRP4 internalization. Mg(2+) serves as cofactor. In terms of processing, N-glycosylated; leading to substrate-selective effects on its transport activity.

The protein localises to the basolateral cell membrane. It localises to the apical cell membrane. The enzyme catalyses ATP + H2O + xenobioticSide 1 = ADP + phosphate + xenobioticSide 2.. It catalyses the reaction an S-substituted glutathione(in) + ATP + H2O = an S-substituted glutathione(out) + ADP + phosphate + H(+). The catalysed reaction is 17beta-estradiol 17-O-(beta-D-glucuronate)(in) + ATP + H2O = 17beta-estradiol 17-O-(beta-D-glucuronate)(out) + ADP + phosphate + H(+). It carries out the reaction dehydroepiandrosterone 3-sulfate(in) + ATP + H2O = dehydroepiandrosterone 3-sulfate(out) + ADP + phosphate + H(+). The enzyme catalyses leukotriene C4(in) + ATP + H2O = leukotriene C4(out) + ADP + phosphate + H(+). It catalyses the reaction leukotriene B4(in) + ATP + H2O = leukotriene B4(out) + ADP + phosphate + H(+). The catalysed reaction is urate(in) + ATP + H2O = urate(out) + ADP + phosphate + H(+). It carries out the reaction 3',5'-cyclic GMP(in) + ATP + H2O = 3',5'-cyclic GMP(out) + ADP + phosphate + H(+). The enzyme catalyses 3',5'-cyclic AMP(in) + ATP + H2O = 3',5'-cyclic AMP(out) + ADP + phosphate + H(+). It catalyses the reaction prostaglandin E2(in) + ATP + H2O = prostaglandin E2(out) + ADP + phosphate + H(+). The catalysed reaction is prostaglandin E1(in) + ATP + H2O = prostaglandin E1(out) + ADP + phosphate + H(+). It carries out the reaction glycodeoxycholate(in) + glutathione(in) + ATP + H2O = glycodeoxycholate(out) + glutathione(out) + ADP + phosphate + H(+). The enzyme catalyses cholate(in) + glutathione(in) + ATP + H2O = cholate(out) + glutathione(out) + ADP + phosphate + H(+). It catalyses the reaction glycocholate(in) + glutathione(in) + ATP + H2O = glycocholate(out) + glutathione(out) + ADP + phosphate + H(+). The catalysed reaction is taurocholate(in) + glutathione(in) + ATP + H2O = taurocholate(out) + glutathione(out) + ADP + phosphate + H(+). It carries out the reaction glycochenodeoxycholate(in) + glutathione(in) + ATP + H2O = glycochenodeoxycholate(out) + glutathione(out) + ADP + phosphate + H(+). The enzyme catalyses taurochenodeoxycholate(in) + glutathione(in) + ATP + H2O = taurochenodeoxycholate(out) + glutathione(out) + ADP + phosphate + H(+). It catalyses the reaction glycoursodeoxycholate(in) + glutathione(in) + ATP + H2O = glycoursodeoxycholate(out) + glutathione(out) + ADP + phosphate + H(+). The catalysed reaction is tauroursodeoxycholate(in) + glutathione(in) + ATP + H2O = tauroursodeoxycholate(out) + glutathione(out) + ADP + phosphate + H(+). ATP-dependent transporter of the ATP-binding cassette (ABC) family that actively extrudes physiological compounds and xenobiotics from cells. Transports a range of endogenous molecules that have a key role in cellular communication and signaling, including cyclic nucleotides such as cyclic AMP (cAMP) and cyclic GMP (cGMP), bile acids, steroid conjugates, urate, and prostaglandins. Also mediates the ATP-dependent efflux of glutathione conjugates such as leukotriene C4 (LTC4) and leukotriene B4 (LTB4). The presence of GSH is necessary for the ATP-dependent transport of LTB4, whereas GSH is not required for the transport of LTC4. Mediates the cotransport of bile acids with reduced glutathione (GSH). Transports a wide range of drugs and their metabolites, including anticancer, antiviral and antibiotics molecules. Confers resistance to anticancer agents. The protein is ATP-binding cassette sub-family C member 4 of Mus musculus (Mouse).